Here is a 459-residue protein sequence, read N- to C-terminus: Interleukin-1 receptor-associated kinase 4 (459 aa).

Position 1 is an N-acetylmethionine (Met-1). In terms of domain architecture, Death spans 20-104 (RKLSDFIDPQ…APATLLLPDA (85 aa)). Lys-34 carries the N6-acetyllysine modification. A disordered region spans residues 115-161 (REAATVAQTHGPCQEKDRTSVMPMPKLEHSCEPPDSSSPDNRSVESS). The region spanning 186–454 (SAGGNRMGEG…PDIAKVQQLL (269 aa)) is the Protein kinase domain. ATP-binding positions include 192-200 (MGEGGFGVV) and Lys-213. Catalysis depends on Asp-311, which acts as the Proton acceptor. Residues 313–316 (KSAN) and Asp-329 contribute to the ATP site. Residues Thr-342 and Thr-345 each carry the phosphothreonine modification. Ser-346 is subject to Phosphoserine.

The protein belongs to the protein kinase superfamily. TKL Ser/Thr protein kinase family. Pelle subfamily. As to quaternary structure, associates with MYD88 and IRAK2 to form a ternary complex called the Myddosome. Once phosphorylated, IRAK4 dissociates from the receptor complex and then associates with the TNF receptor-associated factor 6 (TRAF6), IRAK1, and PELI1; this intermediate complex is required for subsequent NF-kappa-B activation. Direct binding of SMAD6 to PELI1 prevents complex formation and hence negatively regulates IL1R-TLR signaling and eventually NF-kappa-B-mediated gene expression. Interacts with IL1RL1. Interacts (when phosphorylated) with IRAK1. May interact (when phosphorylated) with IRAK3. It depends on Mg(2+) as a cofactor. In terms of processing, phosphorylated.

It localises to the cytoplasm. The catalysed reaction is L-seryl-[protein] + ATP = O-phospho-L-seryl-[protein] + ADP + H(+). The enzyme catalyses L-threonyl-[protein] + ATP = O-phospho-L-threonyl-[protein] + ADP + H(+). In terms of biological role, serine/threonine-protein kinase that plays a critical role in initiating innate immune response against foreign pathogens. Involved in Toll-like receptor (TLR) and IL-1R signaling pathways. Is rapidly recruited by MYD88 to the receptor-signaling complex upon TLR activation to form the Myddosome together with IRAK2. Phosphorylates initially IRAK1, thus stimulating the kinase activity and intensive autophosphorylation of IRAK1. Phosphorylates E3 ubiquitin ligases Pellino proteins (PELI1, PELI2 and PELI3) to promote pellino-mediated polyubiquitination of IRAK1. Then, the ubiquitin-binding domain of IKBKG/NEMO binds to polyubiquitinated IRAK1 bringing together the IRAK1-MAP3K7/TAK1-TRAF6 complex and the NEMO-IKKA-IKKB complex. In turn, MAP3K7/TAK1 activates IKKs (CHUK/IKKA and IKBKB/IKKB) leading to NF-kappa-B nuclear translocation and activation. Alternatively, phosphorylates TIRAP to promote its ubiquitination and subsequent degradation. Phosphorylates NCF1 and regulates NADPH oxidase activation after LPS stimulation suggesting a similar mechanism during microbial infections. In Mus musculus (Mouse), this protein is Interleukin-1 receptor-associated kinase 4 (Irak4).